Here is a 294-residue protein sequence, read N- to C-terminus: Chelated iron transport system membrane protein YfeC (294 aa).

8 consecutive transmembrane segments (helical) span residues A17–L37, V51–F71, A93–N113, I140–F160, I169–V189, T194–L214, L221–F241, and A246–A266.

Belongs to the ABC-3 integral membrane protein family.

It localises to the cell inner membrane. Part of an ATP-driven transport system YfeABC for chelated iron. This Yersinia pestis protein is Chelated iron transport system membrane protein YfeC (yfeC).